The following is a 597-amino-acid chain: Elongation factor 4 (597 aa).

The 183-residue stretch at 2–184 (DHIRNFSIIA…SLIAKVPPPK (183 aa)) folds into the tr-type G domain. Residues 14-19 (DHGKST) and 131-134 (NKID) each bind GTP.

Belongs to the TRAFAC class translation factor GTPase superfamily. Classic translation factor GTPase family. LepA subfamily.

The protein localises to the cell inner membrane. It carries out the reaction GTP + H2O = GDP + phosphate + H(+). In terms of biological role, required for accurate and efficient protein synthesis under certain stress conditions. May act as a fidelity factor of the translation reaction, by catalyzing a one-codon backward translocation of tRNAs on improperly translocated ribosomes. Back-translocation proceeds from a post-translocation (POST) complex to a pre-translocation (PRE) complex, thus giving elongation factor G a second chance to translocate the tRNAs correctly. Binds to ribosomes in a GTP-dependent manner. The protein is Elongation factor 4 of Burkholderia cenocepacia (strain HI2424).